A 386-amino-acid polypeptide reads, in one-letter code: Histidinol-phosphate aminotransferase (386 aa).

Residues 1–11 (MMVRKSTASNR) show a composition bias toward polar residues. Residues 1-22 (MMVRKSTASNRRLQDKGDEEPV) are disordered. Lys-248 is subject to N6-(pyridoxal phosphate)lysine.

The protein belongs to the class-II pyridoxal-phosphate-dependent aminotransferase family. Histidinol-phosphate aminotransferase subfamily. Homodimer. Requires pyridoxal 5'-phosphate as cofactor.

It catalyses the reaction L-histidinol phosphate + 2-oxoglutarate = 3-(imidazol-4-yl)-2-oxopropyl phosphate + L-glutamate. Its pathway is amino-acid biosynthesis; L-histidine biosynthesis; L-histidine from 5-phospho-alpha-D-ribose 1-diphosphate: step 7/9. The protein is Histidinol-phosphate aminotransferase of Moorella thermoacetica (strain ATCC 39073 / JCM 9320).